A 227-amino-acid polypeptide reads, in one-letter code: Ribonuclease 3 (227 aa).

An RNase III domain is found at 4 to 133 (FEKLEKLLSY…LIAAIYLDSN (130 aa)). Position 46 (Glu-46) interacts with Mg(2+). Residue Asp-50 is part of the active site. Mg(2+) contacts are provided by Asn-119 and Glu-122. The active site involves Glu-122. Residues 158–226 (DPKTALQEWA…ARSLLHRLKN (69 aa)) form the DRBM domain.

This sequence belongs to the ribonuclease III family. In terms of assembly, homodimer. It depends on Mg(2+) as a cofactor.

The protein localises to the cytoplasm. It carries out the reaction Endonucleolytic cleavage to 5'-phosphomonoester.. Functionally, digests double-stranded RNA. Involved in the processing of primary rRNA transcript to yield the immediate precursors to the large and small rRNAs (23S and 16S). Processes some mRNAs, and tRNAs when they are encoded in the rRNA operon. Processes pre-crRNA and tracrRNA of type II CRISPR loci if present in the organism. The chain is Ribonuclease 3 from Rickettsia conorii (strain ATCC VR-613 / Malish 7).